A 500-amino-acid polypeptide reads, in one-letter code: Maintenance of mitochondrial morphology protein 1 (500 aa).

The Lumenal segment spans residues 1-42; sequence MATQVATPLSPSYTSELIIVCHHVLQHSPTPLTPHSLSFTQG. A helical transmembrane segment spans residues 43–63; the sequence is FLLGQLSIALLIFFFIKFFIF. Residues 64-500 lie on the Cytoplasmic side of the membrane; the sequence is GEPPSADDRS…PGALAPGTFR (437 aa). One can recognise an SMP-LTD domain in the interval 141 to 375; it reads QPESLDWFNV…EPRFQQIVLP (235 aa). Low complexity-rich tracts occupy residues 283 to 294 and 302 to 316; these read SSSPPSTSTTTP and NSTTSSSTSPPHRPT. 2 disordered regions span residues 283 to 316 and 406 to 500; these read SSSPPSTSTTTPNPEHHRSNSTTSSSTSPPHRPT and EEEE…GTFR. Residues 406-415 are compositionally biased toward acidic residues; that stretch reads EEEEEEEEDG. Residues 438-471 show a composition bias toward basic and acidic residues; that stretch reads EGAKLREAEIRAGVRKQERPGMSRAQTSREEGVR.

The protein belongs to the MMM1 family. In terms of assembly, homodimer. Component of the ER-mitochondria encounter structure (ERMES) or MDM complex, composed of MMM1, MDM10, MDM12 and MDM34. An MMM1 homodimer associates with one molecule of MDM12 on each side in a pairwise head-to-tail manner, and the SMP-LTD domains of MMM1 and MDM12 generate a continuous hydrophobic tunnel for phospholipid trafficking.

Its subcellular location is the endoplasmic reticulum membrane. Its function is as follows. Component of the ERMES/MDM complex, which serves as a molecular tether to connect the endoplasmic reticulum (ER) and mitochondria. Components of this complex are involved in the control of mitochondrial shape and protein biogenesis, and function in nonvesicular lipid trafficking between the ER and mitochondria. The MDM12-MMM1 subcomplex functions in the major beta-barrel assembly pathway that is responsible for biogenesis of all outer membrane beta-barrel proteins, and acts in a late step after the SAM complex. The MDM10-MDM12-MMM1 subcomplex further acts in the TOM40-specific pathway after the action of the MDM12-MMM1 complex. Essential for establishing and maintaining the structure of mitochondria and maintenance of mtDNA nucleoids. This is Maintenance of mitochondrial morphology protein 1 from Phaeosphaeria nodorum (strain SN15 / ATCC MYA-4574 / FGSC 10173) (Glume blotch fungus).